The following is a 724-amino-acid chain: Catalase-peroxidase (724 aa).

Positions Trp98–Tyr226 form a cross-link, tryptophyl-tyrosyl-methioninium (Trp-Tyr) (with M-252). Catalysis depends on His99, which acts as the Proton acceptor. Residues Tyr226 to Met252 constitute a cross-link (tryptophyl-tyrosyl-methioninium (Tyr-Met) (with W-98)). His267 provides a ligand contact to heme b.

The protein belongs to the peroxidase family. Peroxidase/catalase subfamily. Homodimer or homotetramer. The cofactor is heme b. In terms of processing, formation of the three residue Trp-Tyr-Met cross-link is important for the catalase, but not the peroxidase activity of the enzyme.

The catalysed reaction is H2O2 + AH2 = A + 2 H2O. It carries out the reaction 2 H2O2 = O2 + 2 H2O. Bifunctional enzyme with both catalase and broad-spectrum peroxidase activity. The protein is Catalase-peroxidase of Maricaulis maris (strain MCS10) (Caulobacter maris).